The sequence spans 151 residues: D-aminoacyl-tRNA deacylase (151 aa).

The Gly-cisPro motif, important for rejection of L-amino acids motif lies at 136–137 (GP).

Belongs to the DTD family. As to quaternary structure, homodimer.

The protein localises to the cytoplasm. It catalyses the reaction glycyl-tRNA(Ala) + H2O = tRNA(Ala) + glycine + H(+). It carries out the reaction a D-aminoacyl-tRNA + H2O = a tRNA + a D-alpha-amino acid + H(+). Functionally, an aminoacyl-tRNA editing enzyme that deacylates mischarged D-aminoacyl-tRNAs. Also deacylates mischarged glycyl-tRNA(Ala), protecting cells against glycine mischarging by AlaRS. Acts via tRNA-based rather than protein-based catalysis; rejects L-amino acids rather than detecting D-amino acids in the active site. By recycling D-aminoacyl-tRNA to D-amino acids and free tRNA molecules, this enzyme counteracts the toxicity associated with the formation of D-aminoacyl-tRNA entities in vivo and helps enforce protein L-homochirality. The polypeptide is D-aminoacyl-tRNA deacylase (Lactococcus lactis subsp. lactis (strain IL1403) (Streptococcus lactis)).